Consider the following 492-residue polypeptide: Transmembrane protease serine 2 (492 aa).

Topologically, residues 1–84 are cytoplasmic; sequence MALNSGSPPA…TVCTSKTKKA (84 aa). The helical; Signal-anchor for type II membrane protein transmembrane segment at 85–105 threads the bilayer; that stretch reads LCITLTLGTFLVGAALAAGLL. Residues 106-492 are Extracellular-facing; the sequence is WKFMGSKCSN…WIYRQMRADG (387 aa). Cystine bridges form between cysteine 113–cysteine 126, cysteine 120–cysteine 139, cysteine 133–cysteine 148, cysteine 172–cysteine 231, cysteine 185–cysteine 241, cysteine 244–cysteine 365, cysteine 281–cysteine 297, cysteine 410–cysteine 426, and cysteine 437–cysteine 465. An LDL-receptor class A domain is found at 118 to 148; sequence IECDSSGTCINPSNWCDGVSHCPGGEDENRC. Ca(2+) contacts are provided by asparagine 131, aspartate 134, valine 136, aspartate 144, and glutamate 145. Residues 149–242 form the SRCR domain; that stretch reads VRLYGPNFIL…SKAVVSLRCI (94 aa). 2 N-linked (GlcNAc...) asparagine glycosylation sites follow: asparagine 213 and asparagine 249. A Peptidase S1 domain is found at 256-492; the sequence is IVGGESALPG…WIYRQMRADG (237 aa). Catalysis depends on charge relay system residues histidine 296 and aspartate 345. The HKU1-CoV S protein-binding stretch occupies residues 340–470; sequence KTKNNDIALM…WGSGCAKAYR (131 aa). Serine 441 functions as the Charge relay system in the catalytic mechanism.

This sequence belongs to the peptidase S1 family. The catalytically active form interacts with ACE2. Proteolytically processed; by an autocatalytic mechanism. Autocleavage induces active conformation. As to expression, expressed in several tissues that comprise large populations of epithelial cells with the highest level of transcripts measured in the prostate gland. Expressed in type II pneumocytes in the lung (at protein level). Expressed strongly in small intestine. Also expressed in colon, stomach and salivary gland. Coexpressed with ACE2 within lung type II pneumocytes, ileal absorptive enterocytes, intestinal epithelial cells, cornea, gallbladder and nasal goblet secretory cells.

It is found in the cell membrane. Its subcellular location is the secreted. The enzyme catalyses The enzyme cleaves angiotensin-converting enzyme 2 (EC 3.4.17.23) and cleaves influenzea A and B virus and coronavirus spike glycoproteins at arginine residues.. Functionally, plasma membrane-anchored serine protease that cleaves at arginine residues. Participates in proteolytic cascades of relevance for the normal physiologic function of the prostate. Androgen-induced TMPRSS2 activates several substrates that include pro-hepatocyte growth factor/HGF, the protease activated receptor-2/F2RL1 or matriptase/ST14 leading to extracellular matrix disruption and metastasis of prostate cancer cells. In addition, activates trigeminal neurons and contribute to both spontaneous pain and mechanical allodynia. (Microbial infection) Facilitates human coronaviruses SARS-CoV and SARS-CoV-2 infections via two independent mechanisms, proteolytic cleavage of ACE2 receptor which promotes viral uptake, and cleavage of coronavirus spike glycoproteins which activates the glycoprotein for host cell entry. The cleavage of SARS-COV2 spike glycoprotein occurs between the S2 and S2' site. Upon SARS-CoV-2 infection, increases syncytia formation by accelerating the fusion process. Proteolytically cleaves and activates the spike glycoproteins of human coronavirus 229E (HCoV-229E) and human coronavirus EMC (HCoV-EMC) and the fusion glycoproteins F0 of Sendai virus (SeV), human metapneumovirus (HMPV), human parainfluenza 1, 2, 3, 4a and 4b viruses (HPIV). Essential for spread and pathogenesis of influenza A virus (strains H1N1, H3N2 and H7N9); involved in proteolytic cleavage and activation of hemagglutinin (HA) protein which is essential for viral infectivity. Its function is as follows. (Microbial infection) Receptor for human coronavirus HKU1-CoV, acts synergistically with disialoside glycans to facilitate the entry of the virus. After binding to cell-surface disialoside glycans, the viral S protein interacts with the inactive form of TMPRSS2 and inhibits its protease activity. The polypeptide is Transmembrane protease serine 2 (Homo sapiens (Human)).